The sequence spans 189 residues: MTKLLVGLGNPGDKYFETKHNVGFMLIDQLAKKQNVTFTHDKIFQADLASFFLNGEKIYLVKPTTFMNESGKAVHALLTYYGLDIDDLLIIYDDLDMEVGKIRLRAKGSAGGHNGIKSIIQHIGTHVFNRVKIGIGRPKNGMSVVHHVLSKFDRDDYIGILQSVDKVDDSVNYYLQEKNFEKTMQRYNG.

Tyrosine 15 contacts tRNA. Histidine 20 functions as the Proton acceptor in the catalytic mechanism. 3 residues coordinate tRNA: phenylalanine 66, asparagine 68, and asparagine 114.

This sequence belongs to the PTH family. As to quaternary structure, monomer.

The protein resides in the cytoplasm. The enzyme catalyses an N-acyl-L-alpha-aminoacyl-tRNA + H2O = an N-acyl-L-amino acid + a tRNA + H(+). Its function is as follows. Hydrolyzes ribosome-free peptidyl-tRNAs (with 1 or more amino acids incorporated), which drop off the ribosome during protein synthesis, or as a result of ribosome stalling. Catalyzes the release of premature peptidyl moieties from peptidyl-tRNA molecules trapped in stalled 50S ribosomal subunits, and thus maintains levels of free tRNAs and 50S ribosomes. The polypeptide is Peptidyl-tRNA hydrolase (Streptococcus pneumoniae (strain CGSP14)).